A 103-amino-acid polypeptide reads, in one-letter code: ATP synthase F(0) complex subunit g, mitochondrial (103 aa).

An N-acetylalanine modification is found at Ala2. Residues Lys11, Lys24, Lys35, and Lys54 each carry the N6-acetyllysine modification.

Belongs to the ATPase g subunit family. As to quaternary structure, component of the ATP synthase complex composed at least of ATP5F1A/subunit alpha, ATP5F1B/subunit beta, ATP5MC1/subunit c (homooctomer), MT-ATP6/subunit a, MT-ATP8/subunit 8, ATP5ME/subunit e, ATP5MF/subunit f, ATP5MG/subunit g, ATP5MK/subunit k, ATP5MJ/subunit j, ATP5F1C/subunit gamma, ATP5F1D/subunit delta, ATP5F1E/subunit epsilon, ATP5PF/subunit F6, ATP5PB/subunit b, ATP5PD/subunit d, ATP5PO/subunit OSCP. ATP synthase complex consists of a soluble F(1) head domain (subunits alpha(3) and beta(3)) - the catalytic core - and a membrane F(0) domain - the membrane proton channel (subunits c, a, 8, e, f, g, k and j). These two domains are linked by a central stalk (subunits gamma, delta, and epsilon) rotating inside the F1 region and a stationary peripheral stalk (subunits F6, b, d, and OSCP).

It is found in the mitochondrion. The protein localises to the mitochondrion inner membrane. Subunit g, of the mitochondrial membrane ATP synthase complex (F(1)F(0) ATP synthase or Complex V) that produces ATP from ADP in the presence of a proton gradient across the membrane which is generated by electron transport complexes of the respiratory chain. ATP synthase complex consist of a soluble F(1) head domain - the catalytic core - and a membrane F(1) domain - the membrane proton channel. These two domains are linked by a central stalk rotating inside the F(1) region and a stationary peripheral stalk. During catalysis, ATP synthesis in the catalytic domain of F(1) is coupled via a rotary mechanism of the central stalk subunits to proton translocation. In vivo, can only synthesize ATP although its ATP hydrolase activity can be activated artificially in vitro. Part of the complex F(0) domain. The protein is ATP synthase F(0) complex subunit g, mitochondrial of Pongo abelii (Sumatran orangutan).